The primary structure comprises 793 residues: DNA mismatch repair protein MutS (793 aa).

Residue Gly-589–Ser-596 participates in ATP binding.

It belongs to the DNA mismatch repair MutS family.

Functionally, this protein is involved in the repair of mismatches in DNA. It is possible that it carries out the mismatch recognition step. This protein has a weak ATPase activity. The chain is DNA mismatch repair protein MutS from Thermotoga petrophila (strain ATCC BAA-488 / DSM 13995 / JCM 10881 / RKU-1).